Here is a 160-residue protein sequence, read N- to C-terminus: Ribosomal RNA large subunit methyltransferase H (160 aa).

Residues Leu-78, Gly-109, and 128 to 133 contribute to the S-adenosyl-L-methionine site; that span reads LSNLTL.

It belongs to the RNA methyltransferase RlmH family. As to quaternary structure, homodimer.

It localises to the cytoplasm. The catalysed reaction is pseudouridine(1915) in 23S rRNA + S-adenosyl-L-methionine = N(3)-methylpseudouridine(1915) in 23S rRNA + S-adenosyl-L-homocysteine + H(+). Its function is as follows. Specifically methylates the pseudouridine at position 1915 (m3Psi1915) in 23S rRNA. In Alcanivorax borkumensis (strain ATCC 700651 / DSM 11573 / NCIMB 13689 / SK2), this protein is Ribosomal RNA large subunit methyltransferase H.